A 102-amino-acid chain; its full sequence is Putative pterin-4-alpha-carbinolamine dehydratase (102 aa).

Belongs to the pterin-4-alpha-carbinolamine dehydratase family.

It catalyses the reaction (4aS,6R)-4a-hydroxy-L-erythro-5,6,7,8-tetrahydrobiopterin = (6R)-L-erythro-6,7-dihydrobiopterin + H2O. This is Putative pterin-4-alpha-carbinolamine dehydratase from Burkholderia multivorans (strain ATCC 17616 / 249).